Consider the following 148-residue polypeptide: NADH-quinone oxidoreductase subunit A (148 aa).

3 helical membrane-spanning segments follow: residues 14 to 34, 68 to 88, and 98 to 118; these read WAFA…LVGG, FYLV…LYAW, and VGFV…VYLV.

The protein belongs to the complex I subunit 3 family. In terms of assembly, NDH-1 is composed of 13 different subunits. Subunits NuoA, H, J, K, L, M, N constitute the membrane sector of the complex.

The protein resides in the cell inner membrane. The catalysed reaction is a quinone + NADH + 5 H(+)(in) = a quinol + NAD(+) + 4 H(+)(out). Functionally, NDH-1 shuttles electrons from NADH, via FMN and iron-sulfur (Fe-S) centers, to quinones in the respiratory chain. The immediate electron acceptor for the enzyme in this species is believed to be ubiquinone. Couples the redox reaction to proton translocation (for every two electrons transferred, four hydrogen ions are translocated across the cytoplasmic membrane), and thus conserves the redox energy in a proton gradient. This chain is NADH-quinone oxidoreductase subunit A, found in Klebsiella pneumoniae subsp. pneumoniae (strain ATCC 700721 / MGH 78578).